The primary structure comprises 210 residues: MADS-box protein AeAP3-2 (210 aa).

In terms of domain architecture, MADS-box spans 1-36; sequence GGLLKKARELAILCDAQLGVIIFSSSGKMFEFSSPP. Residues 59-149 form the K-box domain; sequence NQQVYCEITR…YRVIQDHHAA (91 aa).

In terms of tissue distribution, expressed exclusively in the carpel.

Its subcellular location is the nucleus. Functionally, probable transcription factor. The sequence is that of MADS-box protein AeAP3-2 (AP3-2) from Asarum europaeum (Asarabacca).